Here is a 339-residue protein sequence, read N- to C-terminus: Heat-inducible transcription repressor HrcA (339 aa).

It belongs to the HrcA family.

Its function is as follows. Negative regulator of class I heat shock genes (grpE-dnaK-dnaJ and groELS operons). Prevents heat-shock induction of these operons. This Thermotoga neapolitana (strain ATCC 49049 / DSM 4359 / NBRC 107923 / NS-E) protein is Heat-inducible transcription repressor HrcA.